The following is a 177-amino-acid chain: Adenine phosphoribosyltransferase (177 aa).

Belongs to the purine/pyrimidine phosphoribosyltransferase family. As to quaternary structure, homodimer.

Its subcellular location is the cytoplasm. It carries out the reaction AMP + diphosphate = 5-phospho-alpha-D-ribose 1-diphosphate + adenine. It participates in purine metabolism; AMP biosynthesis via salvage pathway; AMP from adenine: step 1/1. Catalyzes a salvage reaction resulting in the formation of AMP, that is energically less costly than de novo synthesis. This is Adenine phosphoribosyltransferase from Chlorobium limicola (strain DSM 245 / NBRC 103803 / 6330).